Here is a 346-residue protein sequence, read N- to C-terminus: MNESTMNTKNSEQAILNSEYYETQEISHEIKTVNASVQSSILKDTNTYLTEATFNLPDYLAQRREKVEAALESSITSGYPEKLYKSMRYSLMAGGKRLRPILCLASCELSGGVLEMAMPTACALEMLHTMSLMHDDLPALDNDDYRRGKLTNHKVYGENIAILAGDALLPYAFEYIVVQTKGVPADRLLRVIGQLSHAVGAAGLAGGQVADLESEKLQNIDLATLNFIHSHKTGALLEACVVSGALLVGANDEVLWRLSRYARNVGLAFQIIDDVLDVIATKEQLGKTPGKDEKAQKATYPSLLGINESRYQAQKLIEEAKKELAPFEEKAIPLISLADYIITRTH.

K96, R99, and H128 together coordinate isopentenyl diphosphate. Mg(2+) contacts are provided by D135 and D141. R147 contacts isopentenyl diphosphate.

The protein belongs to the FPP/GGPP synthase family. Requires Mg(2+) as cofactor.

The enzyme catalyses isopentenyl diphosphate + dimethylallyl diphosphate = (2E)-geranyl diphosphate + diphosphate. It functions in the pathway isoprenoid biosynthesis; geranyl diphosphate biosynthesis; geranyl diphosphate from dimethylallyl diphosphate and isopentenyl diphosphate: step 1/1. Its function is as follows. Prenyltransferase involved in the biosynthesis of ambiguines, a family of hapalindole-type alkaloids. Catalyzes the addition of isopentenyl diphosphate (IPP) onto dimethylallyl diphosphate (DMAPP) to form geranyl pyrophosphate (GPP). Cannot use farnesyl diphosphate (FPP) or geranylgeranyl diphosphate (GGPP). The polypeptide is Dimethylallyltranstransferase (Fischerella ambigua (strain UTEX 1903)).